The primary structure comprises 118 residues: Small ribosomal subunit protein uS13 (118 aa).

The interval arginine 93–lysine 118 is disordered.

This sequence belongs to the universal ribosomal protein uS13 family. Part of the 30S ribosomal subunit. Forms a loose heterodimer with protein S19. Forms two bridges to the 50S subunit in the 70S ribosome.

Its function is as follows. Located at the top of the head of the 30S subunit, it contacts several helices of the 16S rRNA. In the 70S ribosome it contacts the 23S rRNA (bridge B1a) and protein L5 of the 50S subunit (bridge B1b), connecting the 2 subunits; these bridges are implicated in subunit movement. Contacts the tRNAs in the A and P-sites. The chain is Small ribosomal subunit protein uS13 from Pseudomonas syringae pv. tomato (strain ATCC BAA-871 / DC3000).